A 442-amino-acid polypeptide reads, in one-letter code: tRNA-2-methylthio-N(6)-dimethylallyladenosine synthase (442 aa).

The region spanning 3 to 120 (KKLYIETHGC…LPEMIDAARI (118 aa)) is the MTTase N-terminal domain. The [4Fe-4S] cluster site is built by C12, C49, C83, C157, C161, and C164. In terms of domain architecture, Radical SAM core spans 143–375 (RIDGPSAYVS…QHRLNQQGFE (233 aa)). In terms of domain architecture, TRAM spans 378–442 (RQMVGSVQRI…PHSLRGSLIQ (65 aa)).

The protein belongs to the methylthiotransferase family. MiaB subfamily. In terms of assembly, monomer. It depends on [4Fe-4S] cluster as a cofactor.

The protein localises to the cytoplasm. The catalysed reaction is N(6)-dimethylallyladenosine(37) in tRNA + (sulfur carrier)-SH + AH2 + 2 S-adenosyl-L-methionine = 2-methylsulfanyl-N(6)-dimethylallyladenosine(37) in tRNA + (sulfur carrier)-H + 5'-deoxyadenosine + L-methionine + A + S-adenosyl-L-homocysteine + 2 H(+). Catalyzes the methylthiolation of N6-(dimethylallyl)adenosine (i(6)A), leading to the formation of 2-methylthio-N6-(dimethylallyl)adenosine (ms(2)i(6)A) at position 37 in tRNAs that read codons beginning with uridine. This is tRNA-2-methylthio-N(6)-dimethylallyladenosine synthase from Pseudomonas fluorescens (strain Pf0-1).